The sequence spans 640 residues: (Z)-beta-ocimene synthase TPS13PK, chloroplastic (640 aa).

Residues 1-95 (MAALVSTVSS…PFKDEAYVKR (95 aa)) constitute a chloroplast transit peptide. Residues 50–69 (MSTNNNNNNNQKNSSRRSAN) are disordered. Residues 60–69 (QKNSSRRSAN) show a composition bias toward polar residues. Residues Arg-334, Asp-371, Asp-375, Arg-515, and Asp-518 each coordinate (2E)-geranyl diphosphate. 2 residues coordinate Mg(2+): Asp-371 and Asp-375. The short motif at 371-375 (DDIYD) is the DDXXD motif element. 3 residues coordinate Mg(2+): Asp-518, Thr-522, and Glu-526.

Belongs to the terpene synthase family. Monomer. The cofactor is Mg(2+).

It is found in the plastid. Its subcellular location is the chloroplast. The catalysed reaction is (2E)-geranyl diphosphate = (Z)-beta-ocimene + diphosphate. The protein operates within secondary metabolite biosynthesis; terpenoid biosynthesis. Involved in monoterpene (C10) olefins biosynthesis, constituants of cannabinoids and terpenoids-rich resins. Catalyzes mainly the conversion of (2E)-geranyl diphosphate to (Z)-beta-ocimene. This Cannabis sativa (Hemp) protein is (Z)-beta-ocimene synthase TPS13PK, chloroplastic.